The following is a 1481-amino-acid chain: Protein shortage in chiasmata 1 ortholog (1481 aa).

Disordered regions lie at residues 479-498 (TDVH…EKEV) and 512-560 (KSKV…IQAS). A compositionally biased stretch (basic and acidic residues) spans 513-531 (SKVEANPKNDQEPEARIMQ). Residues 543 to 560 (SSQVPSAESASSSQIQAS) are compositionally biased toward low complexity.

Belongs to the XPF family. Highly divergent. In terms of assembly, interacts with TEX11. Interacts with SPO16. Mainly expressed in adult testis.

The protein resides in the chromosome. In terms of biological role, ATPase required during meiosis for the formation of crossover recombination intermediates. Binds DNA: preferentially binds to single-stranded DNA and DNA branched structures. Does not show nuclease activity in vitro, but shows ATPase activity, which is stimulated by the presence of single-stranded DNA. Plays a key role in homologous recombination and crossing-over in meiotic prophase I in male and female germ cells. Required for proper synaptonemal complex assembly and homologous chromosome pairing. Required for recruitment of TEX11 and MSH4 to recombination intermediates. This Mus musculus (Mouse) protein is Protein shortage in chiasmata 1 ortholog.